Reading from the N-terminus, the 90-residue chain is HssA/B-like protein 4 (90 aa).

This sequence belongs to the hssA/B family.

The chain is HssA/B-like protein 4 (hssl4) from Dictyostelium discoideum (Social amoeba).